Here is a 301-residue protein sequence, read N- to C-terminus: NAD kinase (301 aa).

Asp81 (proton acceptor) is an active-site residue. Residues 81-82, 155-156, His166, Arg183, Asp185, 196-201, and Gln256 each bind NAD(+); these read DG, NE, and TAYSLS.

This sequence belongs to the NAD kinase family. A divalent metal cation serves as cofactor.

It localises to the cytoplasm. The enzyme catalyses NAD(+) + ATP = ADP + NADP(+) + H(+). Involved in the regulation of the intracellular balance of NAD and NADP, and is a key enzyme in the biosynthesis of NADP. Catalyzes specifically the phosphorylation on 2'-hydroxyl of the adenosine moiety of NAD to yield NADP. The sequence is that of NAD kinase from Mannheimia succiniciproducens (strain KCTC 0769BP / MBEL55E).